A 77-amino-acid chain; its full sequence is Envelope glycoprotein (77 aa).

Topologically, residues 1 to 24 are extracellular; the sequence is LERQKNQNWYEGWFNSSPWFTTLL. A helical transmembrane segment spans residues 25–45; the sequence is STIAGPLLLLLLLLILGPCII. A lipid anchor (S-palmitoyl cysteine; by host) is attached at cysteine 43. The Cytoplasmic portion of the chain corresponds to 46-77; it reads NRLVQFINNRVSAVKILVLRQKYQTLDNEDNL. The YXXL motif; contains endocytosis signal signature appears at 68–71; that stretch reads YQTL.

As to quaternary structure, the mature envelope protein (Env) consists of a trimer of SU-TM heterodimers attached by noncovalent interactions or by a labile interchain disulfide bond. In terms of processing, specific enzymatic cleavages in vivo yield mature proteins. Envelope glycoproteins are synthesized as an inactive precursor that is N-glycosylated and processed likely by host cell furin or by a furin-like protease in the Golgi to yield the mature SU and TM proteins. The cleavage site between SU and TM requires the minimal sequence [KR]-X-[KR]-R. The R-peptide is released from the C-terminus of the cytoplasmic tail of the TM protein upon particle formation as a result of proteolytic cleavage by the viral protease. Cleavage of this peptide is required for TM to become fusogenic. Post-translationally, the transmembrane protein is palmitoylated. The R-peptide is palmitoylated.

The protein localises to the virion membrane. It localises to the host cell membrane. In terms of biological role, the surface protein (SU) attaches the virus to the host cell by binding to its receptor. This interaction triggers the refolding of the transmembrane protein (TM) and is thought to activate its fusogenic potential by unmasking its fusion peptide. Fusion occurs at the host cell plasma membrane. Functionally, the transmembrane protein (TM) acts as a class I viral fusion protein. Under the current model, the protein has at least 3 conformational states: pre-fusion native state, pre-hairpin intermediate state, and post-fusion hairpin state. During viral and target cell membrane fusion, the coiled coil regions (heptad repeats) assume a trimer-of-hairpins structure, positioning the fusion peptide in close proximity to the C-terminal region of the ectodomain. The formation of this structure appears to drive apposition and subsequent fusion of viral and target cell membranes. Membranes fusion leads to delivery of the nucleocapsid into the cytoplasm. The chain is Envelope glycoprotein (env) from Woolly monkey sarcoma virus (WMSV).